Reading from the N-terminus, the 64-residue chain is Temporin-ALh (64 aa).

The N-terminal stretch at 1–22 (MFPLKKSLLLLFFLATINLSLC) is a signal peptide. Residues 23 to 46 (EQERNAEEERRDEPDERNAEVEKR) constitute a propeptide that is removed on maturation. Ser62 bears the Serine amide mark.

Belongs to the frog skin active peptide (FSAP) family. Temporin subfamily. As to expression, expressed by the skin glands.

It localises to the secreted. Antimicrobial peptide with activity against Gram-positive and Gram-negative bacteria and against fungi. Has been tested against S.aureus (MIC=2.5 ug/mL), B.pumilus (MIC=7.5 ug/mL), B.cereus (MIC=75.0 ug/mL), E.coli (MIC=5.0 ug/mL), B.dysenteriae (MIC=20.0 ug/mL), A.cacoaceticus (MIC=60.0 ug/mL), P.aeruginosa (MIC=2.5 ug/mL) and C.albicans (MIC=2.5 ug/mL). Also shows a weak hemolytic activity. This chain is Temporin-ALh, found in Amolops loloensis (Lolokou Sucker Frog).